The sequence spans 498 residues: Guanosine-5'-triphosphate,3'-diphosphate pyrophosphatase (498 aa).

It belongs to the GppA/Ppx family. GppA subfamily.

The enzyme catalyses guanosine 3'-diphosphate 5'-triphosphate + H2O = guanosine 3',5'-bis(diphosphate) + phosphate + H(+). It participates in purine metabolism; ppGpp biosynthesis; ppGpp from GTP: step 2/2. Catalyzes the conversion of pppGpp to ppGpp. Guanosine pentaphosphate (pppGpp) is a cytoplasmic signaling molecule which together with ppGpp controls the 'stringent response', an adaptive process that allows bacteria to respond to amino acid starvation, resulting in the coordinated regulation of numerous cellular activities. This Serratia proteamaculans (strain 568) protein is Guanosine-5'-triphosphate,3'-diphosphate pyrophosphatase.